Reading from the N-terminus, the 263-residue chain is MNTISSVFENLDKQCALIPFITAGDPDLVSTGKALQILDSYGADIIELGLPYSDPLADGPIIQEASNRALKQGINLNKILSMVKTVNMTIKAPIVLFTYYNPVLHLGINNFIYAISNAGIRGLLIPDLPIEESEYVISVCNLFNIELILLLAPTSSRERISKIIKRAPGCIYLVSTTGVTGQKSQLTSQLKELTETVKTMTNKSIILGFGISTTEQIKEIKGWNINGIVIGSAFVKRLSGNVPEAGLEQIQSFCQDAKNAIIS.

Active-site proton acceptor residues include Glu47 and Asp58.

This sequence belongs to the TrpA family. Tetramer of two alpha and two beta chains.

It localises to the plastid. It is found in the chloroplast. It catalyses the reaction (1S,2R)-1-C-(indol-3-yl)glycerol 3-phosphate + L-serine = D-glyceraldehyde 3-phosphate + L-tryptophan + H2O. It participates in amino-acid biosynthesis; L-tryptophan biosynthesis; L-tryptophan from chorismate: step 5/5. The alpha subunit is responsible for the aldol cleavage of indoleglycerol phosphate to indole and glyceraldehyde 3-phosphate. This is Tryptophan synthase alpha chain from Pyropia yezoensis (Susabi-nori).